Consider the following 62-residue polypeptide: Conotoxin Cal12.2e (62 aa).

An N-terminal signal peptide occupies residues 1 to 19; the sequence is MKLTCVLVVLLLVLPFGDL.

It belongs to the conotoxin O1 superfamily. In terms of processing, contains 4 disulfide bonds. In terms of tissue distribution, expressed by the venom duct.

It is found in the secreted. Its function is as follows. Probable neurotoxin. This is Conotoxin Cal12.2e from Californiconus californicus (California cone).